The chain runs to 613 residues: Ribosome-associated molecular chaperone SSB1 (613 aa).

An N-acetylalanine modification is found at Ala-2. The interval 2–391 (AEGVFQGAIG…ILTGQSTSDE (390 aa)) is nucleotide binding domain (NBD). 16 to 18 (TTY) is a binding site for ATP. Phosphothreonine is present on Thr-47. Residues Lys-73, 205–207 (GGT), 271–278 (ERAKRTLS), and Gly-342 each bind ATP. Positions 392 to 402 (TKDLLLLDVAP) are inter-domain linker. Positions 403–613 (LSLGVGMQGD…RVVTKAMSSR (211 aa)) are substrate binding domain (SBD). The Contributes to ribosome binding motif lies at 428–430 (KRR). Thr-431 carries the post-translational modification Phosphothreonine. A lid domain (SBDalpha) region spans residues 516-612 (SEEIEKMVNQ…KRVVTKAMSS (97 aa)). The short motif at 574-582 (IEAALSDAL) is the Nuclear export signal element. The tract at residues 601–613 (GLKRVVTKAMSSR) is required for interaction with ribosomes.

It belongs to the heat shock protein 70 family. Ssb-type Hsp70 subfamily. In terms of assembly, binds to ribosomes. Binds close to the ribosomal tunnel exit via contacts with both ribosomal proteins RPL35, RPL39 and RPL19, and rRNA. Directly interacts with nascent polypeptides. This interaction is dependent on the ribosome-associated complex (RAC). Interacts with SSE1. Interacts with FES1. Interacts with NAP1.

Its subcellular location is the cytoplasm. It catalyses the reaction ATP + H2O = ADP + phosphate + H(+). Functionally, ribosome-bound, Hsp70-type chaperone that assists in the cotranslational folding of newly synthesized proteins in the cytosol. Stimulates folding by interacting with nascent chains, binding to short, largely hydrophobic sequences exposed by unfolded proteins, thereby stabilizing longer, more slowly translated, and aggregation-prone nascent polypeptides and domains that cannot fold stably until fully synthesized. The Hsp70-protein substrate interaction depends on ATP-binding and on allosteric regulation between the NBD and the SBD. The ATP-bound state is characterized by a fast exchange rate of substrate (low affinity state), while in the ADP-bound state exchange is much slower (high affinity state). During the Hsp70 cycle, the chaperone switches between the ATP-bound state (open conformation) and the ADP-bound state (closed conformation) by major conformational rearrangements involving mainly the lid domain. Ssb cooperates with a specific Hsp40/Hsp70 co-chaperone termed the ribosome-associated complex (RAC), which stimulates the ATPase activity of the ribosome-associated pool of Ssbs and switches it to the high affinity substrate binding state. Hsp110 chaperone SSE1 and FES1 act as nucleotide exchange factors that cause substrate release. This is Ribosome-associated molecular chaperone SSB1 from Saccharomyces cerevisiae (strain ATCC 204508 / S288c) (Baker's yeast).